The sequence spans 255 residues: tRNA (guanine-N(1)-)-methyltransferase (255 aa).

Residues Gly-112 and 131-136 contribute to the S-adenosyl-L-methionine site; that span reads LGDYVL.

The protein belongs to the RNA methyltransferase TrmD family. In terms of assembly, homodimer.

It is found in the cytoplasm. It catalyses the reaction guanosine(37) in tRNA + S-adenosyl-L-methionine = N(1)-methylguanosine(37) in tRNA + S-adenosyl-L-homocysteine + H(+). Specifically methylates guanosine-37 in various tRNAs. In Lacticaseibacillus paracasei (strain ATCC 334 / BCRC 17002 / CCUG 31169 / CIP 107868 / KCTC 3260 / NRRL B-441) (Lactobacillus paracasei), this protein is tRNA (guanine-N(1)-)-methyltransferase.